A 1589-amino-acid chain; its full sequence is Pentafunctional AROM polypeptide (1589 aa).

The 3-dehydroquinate synthase stretch occupies residues 1 to 384; the sequence is MAAPTTIKIL…HEQQASVVSN (384 aa). Residues 44–46, 81–84, 114–116, and Asp-119 contribute to the NAD(+) site; these read DTT, ELSK, and GGV. Arg-130 lines the 7-phospho-2-dehydro-3-deoxy-D-arabino-heptonate pocket. 139–140 contributes to the NAD(+) binding site; sequence TT. The 7-phospho-2-dehydro-3-deoxy-D-arabino-heptonate site is built by Asp-146 and Lys-152. An NAD(+)-binding site is contributed by Lys-161. A 7-phospho-2-dehydro-3-deoxy-D-arabino-heptonate-binding site is contributed by Asn-162. Residues 179-182 and Asn-190 contribute to the NAD(+) site; that span reads FLNT. Glu-194 contacts Zn(2+). 7-phospho-2-dehydro-3-deoxy-D-arabino-heptonate is bound by residues 194-197 and Lys-250; that span reads EVIK. The active-site Proton acceptor; for 3-dehydroquinate synthase activity is the Glu-260. 7-phospho-2-dehydro-3-deoxy-D-arabino-heptonate-binding positions include 264 to 268 and His-271; that span reads RNLLN. Residue His-271 participates in Zn(2+) binding. The active-site Proton acceptor; for 3-dehydroquinate synthase activity is His-275. 2 residues coordinate 7-phospho-2-dehydro-3-deoxy-D-arabino-heptonate: His-287 and Lys-356. His-287 provides a ligand contact to Zn(2+). The segment at 397–841 is EPSP synthase; sequence VSPGVPKSLQ…WDTLAQLFKA (445 aa). Cys-823 functions as the For EPSP synthase activity in the catalytic mechanism. A shikimate kinase region spans residues 861–1052; sequence ASIFIIGMRG…KKKPQSFFVS (192 aa). 867–874 serves as a coordination point for ATP; the sequence is GMRGAGKT. Residues 1053 to 1273 are 3-dehydroquinase; it reads LTLPDLRPSA…AAPGQLSAQD (221 aa). His-1176 serves as the catalytic Proton acceptor; for 3-dehydroquinate dehydratase activity. Lys-1204 functions as the Schiff-base intermediate with substrate; for 3-dehydroquinate dehydratase activity in the catalytic mechanism. Residues 1286 to 1589 are shikimate dehydrogenase; sequence PRKFAIFGKP…VMNPGTDNRG (304 aa).

It in the N-terminal section; belongs to the sugar phosphate cyclases superfamily. Dehydroquinate synthase family. In the 2nd section; belongs to the EPSP synthase family. The protein in the 3rd section; belongs to the shikimate kinase family. This sequence in the 4th section; belongs to the type-I 3-dehydroquinase family. It in the C-terminal section; belongs to the shikimate dehydrogenase family. Homodimer. Requires Zn(2+) as cofactor.

It localises to the cytoplasm. It carries out the reaction 7-phospho-2-dehydro-3-deoxy-D-arabino-heptonate = 3-dehydroquinate + phosphate. It catalyses the reaction 3-dehydroquinate = 3-dehydroshikimate + H2O. The catalysed reaction is shikimate + NADP(+) = 3-dehydroshikimate + NADPH + H(+). The enzyme catalyses shikimate + ATP = 3-phosphoshikimate + ADP + H(+). It carries out the reaction 3-phosphoshikimate + phosphoenolpyruvate = 5-O-(1-carboxyvinyl)-3-phosphoshikimate + phosphate. It functions in the pathway metabolic intermediate biosynthesis; chorismate biosynthesis; chorismate from D-erythrose 4-phosphate and phosphoenolpyruvate: step 2/7. The protein operates within metabolic intermediate biosynthesis; chorismate biosynthesis; chorismate from D-erythrose 4-phosphate and phosphoenolpyruvate: step 3/7. It participates in metabolic intermediate biosynthesis; chorismate biosynthesis; chorismate from D-erythrose 4-phosphate and phosphoenolpyruvate: step 4/7. Its pathway is metabolic intermediate biosynthesis; chorismate biosynthesis; chorismate from D-erythrose 4-phosphate and phosphoenolpyruvate: step 5/7. It functions in the pathway metabolic intermediate biosynthesis; chorismate biosynthesis; chorismate from D-erythrose 4-phosphate and phosphoenolpyruvate: step 6/7. Its function is as follows. The AROM polypeptide catalyzes 5 consecutive enzymatic reactions in prechorismate polyaromatic amino acid biosynthesis. This is Pentafunctional AROM polypeptide from Coccidioides posadasii (strain C735) (Valley fever fungus).